A 143-amino-acid chain; its full sequence is UPF0201 protein Tneu_0685 (143 aa).

It belongs to the UPF0201 family.

The protein is UPF0201 protein Tneu_0685 of Pyrobaculum neutrophilum (strain DSM 2338 / JCM 9278 / NBRC 100436 / V24Sta) (Thermoproteus neutrophilus).